The following is a 256-amino-acid chain: Small ribosomal subunit protein uS3 (256 aa).

A KH type-2 domain is found at 39 to 111 (IREFLNENFS…EVILNIIEVR (73 aa)). A disordered region spans residues 219–256 (DTRKPFEAGNQKRGQKRRPRNDQPGQRPQQRNRNSKED). Residues 240 to 250 (DQPGQRPQQRN) are compositionally biased toward low complexity.

The protein belongs to the universal ribosomal protein uS3 family. In terms of assembly, part of the 30S ribosomal subunit. Forms a tight complex with proteins S10 and S14.

Functionally, binds the lower part of the 30S subunit head. Binds mRNA in the 70S ribosome, positioning it for translation. The chain is Small ribosomal subunit protein uS3 from Acholeplasma laidlawii (strain PG-8A).